The chain runs to 364 residues: Uroporphyrinogen decarboxylase (364 aa).

Substrate is bound by residues 28 to 32 (RQAGR), D78, Y160, T215, and H333.

This sequence belongs to the uroporphyrinogen decarboxylase family. As to quaternary structure, homodimer.

It is found in the cytoplasm. It carries out the reaction uroporphyrinogen III + 4 H(+) = coproporphyrinogen III + 4 CO2. It functions in the pathway porphyrin-containing compound metabolism; protoporphyrin-IX biosynthesis; coproporphyrinogen-III from 5-aminolevulinate: step 4/4. Its function is as follows. Catalyzes the decarboxylation of four acetate groups of uroporphyrinogen-III to yield coproporphyrinogen-III. The protein is Uroporphyrinogen decarboxylase of Burkholderia thailandensis (strain ATCC 700388 / DSM 13276 / CCUG 48851 / CIP 106301 / E264).